The following is a 312-amino-acid chain: Acyl-CoA C20 Delta5-desaturase (312 aa).

2 helical membrane passes run 45-65 (VFHI…PSTF) and 69-89 (SFWV…TLSF). Positions 90, 95, 127, 130, and 131 each coordinate Fe cation. The Histidine box-1 signature appears at 90-95 (HRNLTH). Positions 127 to 131 (HRYHH) match the Histidine box-2 motif. A helical membrane pass occupies residues 193-213 (LQAALLYLFGGFPFIVWGMAV). 4 residues coordinate Fe cation: histidine 230, histidine 259, histidine 262, and histidine 263. Residues 259–263 (HNNHH) carry the Histidine box-3 motif.

The protein belongs to the fatty acid desaturase type 1 family. Fe(2+) serves as cofactor.

It is found in the membrane. The catalysed reaction is (11Z,14Z)-eicosadienoyl-CoA + AH2 + O2 = (5Z,11Z,14Z)-eicosatrienoyl-CoA + A + 2 H2O. It catalyses the reaction (11Z,14Z,17Z)-eicosatrienoyl-CoA + AH2 + O2 = (5Z,11Z,14Z,17Z)-eicosatetraenoyl-CoA + A + 2 H2O. It functions in the pathway lipid metabolism; polyunsaturated fatty acid biosynthesis. Catalyzes the desaturation of 20:2Delta(11,14) and 20:3Delta(11,14,17) to generate sciadonic acid (20:3Delta(5,11,14)) and juniperonic acid (20:4Delta(5,11,14,17)). The protein is Acyl-CoA C20 Delta5-desaturase of Anemone leveillei (Windflower).